The primary structure comprises 1075 residues: Putative type I restriction enzyme MjaVIIP endonuclease subunit (1075 aa).

Belongs to the HsdR family. In terms of assembly, the type I restriction/modification system is composed of three polypeptides R, M and S.

It catalyses the reaction Endonucleolytic cleavage of DNA to give random double-stranded fragments with terminal 5'-phosphates, ATP is simultaneously hydrolyzed.. Functionally, the restriction (R) subunit of a type I restriction enzyme that recognizes 5'-CAAN(7)TGG-3' and cleaves a random distance away. The R subunit is required for both endonuclease and ATPase activities but not for modification. After locating a non-methylated recognition site, the enzyme complex serves as a molecular motor that translocates DNA in an ATP-dependent manner until a collision occurs that triggers cleavage. This Methanocaldococcus jannaschii (strain ATCC 43067 / DSM 2661 / JAL-1 / JCM 10045 / NBRC 100440) (Methanococcus jannaschii) protein is Putative type I restriction enzyme MjaVIIP endonuclease subunit.